Reading from the N-terminus, the 350-residue chain is Methylthioribose-1-phosphate isomerase (350 aa).

Substrate contacts are provided by residues 47-49 (RGA), Arg89, and Gln196. Asp237 functions as the Proton donor in the catalytic mechanism. Residue 247 to 248 (NK) coordinates substrate.

Belongs to the eIF-2B alpha/beta/delta subunits family. MtnA subfamily.

It catalyses the reaction 5-(methylsulfanyl)-alpha-D-ribose 1-phosphate = 5-(methylsulfanyl)-D-ribulose 1-phosphate. The protein operates within amino-acid biosynthesis; L-methionine biosynthesis via salvage pathway; L-methionine from S-methyl-5-thio-alpha-D-ribose 1-phosphate: step 1/6. Functionally, catalyzes the interconversion of methylthioribose-1-phosphate (MTR-1-P) into methylthioribulose-1-phosphate (MTRu-1-P). This chain is Methylthioribose-1-phosphate isomerase, found in Nitratidesulfovibrio vulgaris (strain DSM 19637 / Miyazaki F) (Desulfovibrio vulgaris).